The chain runs to 877 residues: Clumping factor B (877 aa).

The N-terminal stretch at 1–44 (MKKRIDYLSNKQNKYSIRRFTVGTTSVIVGATILFGIGNHQAQA) is a signal peptide. The YSIRK-G/S signaling motif motif lies at 15 to 26 (YSIRRFTVGTTS). 2 stretches are compositionally biased toward polar residues: residues 44-61 (ASEQ…NASA) and 68-95 (MIET…NVDS). Residues 44–192 (ASEQSNDTTQ…QGTSKPSVRT (149 aa)) are disordered. The tract at residues 45–542 (SEQSNDTTQS…GSADGDSAVN (498 aa)) is ligand binding A region. Residues 96–119 (TTKPMSTQTSNTTTTEPASTNETP) show a composition bias toward low complexity. The segment covering 120–189 (QPTAIKNQAT…SNAQGTSKPS (70 aa)) has biased composition (polar residues). Residues 272-276 (DYSNS) carry the MIDAS-like motif motif. The segment at 530–849 (YGGGSADGDS…ETGDKSENTN (320 aa)) is disordered. Positions 545–555 (DPTPGPPVDPE) are enriched in pro residues. The segment covering 556–801 (PSPDPEPEPT…SDSDSDSDSD (246 aa)) has biased composition (acidic residues). Over residues 805-816 (RVTPPNNEQKAP) the composition is skewed to polar residues. Residues 833 to 846 (HKTDALPETGDKSE) are compositionally biased toward basic and acidic residues. Residues 838–842 (LPETG) carry the LPXTG sorting signal motif. Threonine 841 carries the pentaglycyl murein peptidoglycan amidated threonine modification. A propeptide spans 842–877 (GDKSENTNATLFGAMMALLGSLLLFRKRKQDHKEKA) (removed by sortase).

Belongs to the serine-aspartate repeat-containing protein (SDr) family. In terms of processing, proteolytically cleaved by aureolysin (aur). This cleavage leads to the inactivation of ClfB.

The protein localises to the secreted. Its subcellular location is the cell wall. In terms of biological role, cell surface-associated protein implicated in virulence by promoting bacterial attachment to both alpha- and beta-chains of human fibrinogen and inducing the formation of bacterial clumps. Partly responsible for mediating bacterial attachment to the highly keratinized squamous epithelial cells from the nasal cavity via an interaction with cytokeratin K10 (K10). Also promotes bacterial attachment to cultured keratinocytes, possibly through an interaction with cytokeratin K10. Binds mouse cytokeratin K10. Activates human platelet aggregation. This is Clumping factor B (clfB) from Staphylococcus aureus (strain NCTC 8325 / PS 47).